A 223-amino-acid polypeptide reads, in one-letter code: Ribose-5-phosphate isomerase A (223 aa).

Substrate contacts are provided by residues 26-29, 82-85, and 95-98; these read TGST, DGAD, and KGGG. The Proton acceptor role is filled by glutamate 104. Lysine 122 is a binding site for substrate.

The protein belongs to the ribose 5-phosphate isomerase family. In terms of assembly, homodimer.

It catalyses the reaction aldehydo-D-ribose 5-phosphate = D-ribulose 5-phosphate. It participates in carbohydrate degradation; pentose phosphate pathway; D-ribose 5-phosphate from D-ribulose 5-phosphate (non-oxidative stage): step 1/1. Its function is as follows. Catalyzes the reversible conversion of ribose-5-phosphate to ribulose 5-phosphate. This is Ribose-5-phosphate isomerase A from Streptococcus agalactiae serotype V (strain ATCC BAA-611 / 2603 V/R).